The primary structure comprises 329 residues: NADH-quinone oxidoreductase subunit H (329 aa).

Transmembrane regions (helical) follow at residues 9-29 (LIKILILVAVFSALGGFATYI), 42-62 (GPCYVGPFGLLQVAADGIKLF), 75-95 (FIFTLAPIIAMVSAFVSMAPI), 117-137 (IGFLFFLAVGAAGIYAPILAG), 154-174 (IQLLSFEVVSTLTILAPLMVV), 188-208 (GGFLDWLVFKQPLAFVLFLIA), 238-258 (LKWGMFFLAEYAHLFAFSFVI), 269-291 (WGFIPGGIAILIKAGFFVFLSMW), and 309-329 (WKIMLPLALLNIVLTGIIILI).

The protein belongs to the complex I subunit 1 family. In terms of assembly, NDH-1 is composed of 14 different subunits. Subunits NuoA, H, J, K, L, M, N constitute the membrane sector of the complex.

The protein localises to the cell inner membrane. It carries out the reaction a quinone + NADH + 5 H(+)(in) = a quinol + NAD(+) + 4 H(+)(out). In terms of biological role, NDH-1 shuttles electrons from NADH, via FMN and iron-sulfur (Fe-S) centers, to quinones in the respiratory chain. The immediate electron acceptor for the enzyme in this species is believed to be ubiquinone. Couples the redox reaction to proton translocation (for every two electrons transferred, four hydrogen ions are translocated across the cytoplasmic membrane), and thus conserves the redox energy in a proton gradient. This subunit may bind ubiquinone. The protein is NADH-quinone oxidoreductase subunit H of Helicobacter pylori (strain HPAG1).